The primary structure comprises 334 residues: MESPCRTITLEKNGTSLEPVHYSVQGKEILQIFKENFQKEDPVLFLDGTAGEGGHSFLFLKEFPNSRIILCDRDPIMLSRALTRLSDFSERVVSIQTNFSEINQKLLTSYGIDQTPQGILLDLGISTFHLFHSGRGFSFRESEPLDMRLNPNSGQSAEEILNIYPKDRLMNIFYTYGEERWSKKIAEVIVETRKQNSISTTFELANLVSKIIPRKFWPPGRHPATRIFQALRIEVNQELAHIENGLKLLLDLLRLGGVIQVISFHSLEDRIVKNSFRDYAKQNGFELLTKKPIFPSQEEIDENPASRSAKLRILRKTKSVDKKYRNKNFEEEEE.

S-adenosyl-L-methionine-binding positions include 53-55, D72, F99, D122, and H129; that span reads GGH.

Belongs to the methyltransferase superfamily. RsmH family.

The protein localises to the cytoplasm. The enzyme catalyses cytidine(1402) in 16S rRNA + S-adenosyl-L-methionine = N(4)-methylcytidine(1402) in 16S rRNA + S-adenosyl-L-homocysteine + H(+). In terms of biological role, specifically methylates the N4 position of cytidine in position 1402 (C1402) of 16S rRNA. This is Ribosomal RNA small subunit methyltransferase H from Leptospira interrogans serogroup Icterohaemorrhagiae serovar Lai (strain 56601).